Here is a 214-residue protein sequence, read N- to C-terminus: Large ribosomal subunit protein bL25 (214 aa).

A disordered region spans residues Ala-187–Lys-214. Over residues Glu-200–Lys-214 the composition is skewed to basic and acidic residues.

This sequence belongs to the bacterial ribosomal protein bL25 family. CTC subfamily. Part of the 50S ribosomal subunit; part of the 5S rRNA/L5/L18/L25 subcomplex. Contacts the 5S rRNA. Binds to the 5S rRNA independently of L5 and L18.

In terms of biological role, this is one of the proteins that binds to the 5S RNA in the ribosome where it forms part of the central protuberance. This Thermodesulfovibrio yellowstonii (strain ATCC 51303 / DSM 11347 / YP87) protein is Large ribosomal subunit protein bL25.